Reading from the N-terminus, the 669-residue chain is MSKEIAKKRIEELRDLLNTFNYQYHVLDNPSVSDAEYDRNMQELIKLEAENPEFMSEDSPSVRVGGTVLDIFEKVTHKSPMLSLGNAFNEGDLRDFDRRVRQGIDDANVRYICELKIDGLAVSLHYEKGRFIQGATRGDGVTGEDITQNLKTIKAIPLRLNEEVTLEARGEAYMPKRSFVKLNEEKEQNGEDVFANPRNAAAGSIRQLDPKIAAKRNLSMFVYGLANVEEKTIPSHSESLDFLGELGFKTNPNRRTCETIEEVIAYVEEWQEKRPHLDYEIDGIVIKVDDVALQESLGTTAKSPRWAIAYKFPAEEVVTRLTGIELSVGRTGVVTPTAELEPVRVAGTIVRRASLHNEDLIREKDIRIGDYVVVKKAGDIIPEVVNVIFDKRTGEEEEYHMPTHCPACESELVRLEEEVALRCINPTCPAQIREGLIHFVSRNAMNIDGLGERVITQLFDADYIRTFADLYSLTKEQLLQLERFGEKSATNLVQAIENSKENSLERLLFGLGIRHVGAKAARTFAEHFETMDALVKATEEELKTINEIGEKMAQSVVAYFDNEDVLELLQQFKEYGVNMTYKGIKIADLQNVESYFAGKTVVLTGKLEVMGRSEAKKKIEALGGKVTGSVSKSTDLVVAGEAAGSKLAQAEKHNVEVWNEERFLQELNK.

Residues 34 to 38 (DAEYD), 83 to 84 (SL), and glutamate 114 each bind NAD(+). Lysine 116 acts as the N6-AMP-lysine intermediate in catalysis. Arginine 137, glutamate 171, lysine 287, and lysine 311 together coordinate NAD(+). Residues cysteine 405, cysteine 408, cysteine 423, and cysteine 428 each contribute to the Zn(2+) site. Positions 591–669 (NVESYFAGKT…EERFLQELNK (79 aa)) constitute a BRCT domain.

This sequence belongs to the NAD-dependent DNA ligase family. LigA subfamily. Mg(2+) serves as cofactor. Requires Mn(2+) as cofactor.

It carries out the reaction NAD(+) + (deoxyribonucleotide)n-3'-hydroxyl + 5'-phospho-(deoxyribonucleotide)m = (deoxyribonucleotide)n+m + AMP + beta-nicotinamide D-nucleotide.. Functionally, DNA ligase that catalyzes the formation of phosphodiester linkages between 5'-phosphoryl and 3'-hydroxyl groups in double-stranded DNA using NAD as a coenzyme and as the energy source for the reaction. It is essential for DNA replication and repair of damaged DNA. The sequence is that of DNA ligase from Bacillus cereus (strain ZK / E33L).